The primary structure comprises 263 residues: Acyl-[acyl-carrier-protein]--UDP-N-acetylglucosamine O-acyltransferase (263 aa).

It belongs to the transferase hexapeptide repeat family. LpxA subfamily. As to quaternary structure, homotrimer.

The protein localises to the cytoplasm. The catalysed reaction is a (3R)-hydroxyacyl-[ACP] + UDP-N-acetyl-alpha-D-glucosamine = a UDP-3-O-[(3R)-3-hydroxyacyl]-N-acetyl-alpha-D-glucosamine + holo-[ACP]. Its pathway is glycolipid biosynthesis; lipid IV(A) biosynthesis; lipid IV(A) from (3R)-3-hydroxytetradecanoyl-[acyl-carrier-protein] and UDP-N-acetyl-alpha-D-glucosamine: step 1/6. Its function is as follows. Involved in the biosynthesis of lipid A, a phosphorylated glycolipid that anchors the lipopolysaccharide to the outer membrane of the cell. The chain is Acyl-[acyl-carrier-protein]--UDP-N-acetylglucosamine O-acyltransferase from Xanthomonas euvesicatoria pv. vesicatoria (strain 85-10) (Xanthomonas campestris pv. vesicatoria).